The sequence spans 1103 residues: Activity-dependent neuroprotector homeobox protein (1103 aa).

Residues K39 and K72 each participate in a glycyl lysine isopeptide (Lys-Gly) (interchain with G-Cter in SUMO2) cross-link. A C2H2-type 1; degenerate zinc finger spans residues 74–97; it reads FCCSACPFSSKFFSAYKSHFRNVH. S98 is subject to Phosphoserine. The C2H2-type 2; degenerate zinc finger occupies 107-129; sequence LNCPYCTFNADKKTLETHIKIFH. The tract at residues 133-154 is disordered; it reads SSAPSSSLSTFKDKNKNDGLKP. Over residues 143–154 the composition is skewed to basic and acidic residues; the sequence is FKDKNKNDGLKP. Glycyl lysine isopeptide (Lys-Gly) (interchain with G-Cter in SUMO2) cross-links involve residues K144 and K155. The C2H2-type 3; degenerate zinc finger occupies 165–188; the sequence is YYCKKCTYRDPLYEIVRKHIYREH. Glycyl lysine isopeptide (Lys-Gly) (interchain with G-Cter in SUMO2) cross-links involve residues K203, K231, K266, K274, K278, K279, K311, and K335. A C2H2-type 4; degenerate zinc finger spans residues 221–244; it reads IHCKRCLFMPKSYEALVQHVIEDH. Residue R348 is modified to Asymmetric dimethylarginine. The segment at 354 to 361 is neuroprotective peptide (NAP); the sequence is NAPVSIPQ. The interval 360-439 is disordered; sequence PQQSQSVKQL…PAATGPPPSN (80 aa). Residues K367 and K408 each participate in a glycyl lysine isopeptide (Lys-Gly) (interchain with G-Cter in SUMO2) cross-link. The segment covering 393–423 has biased composition (polar residues); the sequence is SLQTANTSSLPPGQVKSPSVSQSQASRVLGQ. 2 positions are modified to phosphoserine: S409 and S413. K427 is covalently cross-linked (Glycyl lysine isopeptide (Lys-Gly) (interchain with G-Cter in SUMO2)). The segment covering 427 to 438 has biased composition (pro residues); it reads KPPPAATGPPPS. Residues 447-469 form a C2H2-type 5; atypical zinc finger; sequence KICTICNELFPENVYSVHFEKEH. 2 consecutive C2H2-type zinc fingers follow at residues 489 to 510 and 512 to 535; these read SKCL…MLIH and LSCP…RMVH. Glycyl lysine isopeptide (Lys-Gly) (interchain with G-Cter in SUMO2) cross-links involve residues K600 and K606. S608 carries the phosphoserine modification. Residues K616, K621, K632, and K658 each participate in a glycyl lysine isopeptide (Lys-Gly) (interchain with G-Cter in SUMO2) cross-link. The C2H2-type 8; atypical zinc-finger motif lies at 622 to 647; the sequence is TLCPLCFSILKGPISDALAHHLRERH. Residues 662–686 form a C2H2-type 9; atypical zinc finger; sequence YKCIHCLGVYTSNMTASTITLHLVH. The tract at residues 691-712 is disordered; the sequence is GKTQNGQDKTNAPSRLNQSPGL. Over residues 692-710 the composition is skewed to polar residues; sequence KTQNGQDKTNAPSRLNQSP. Residue K699 forms a Glycyl lysine isopeptide (Lys-Gly) (interchain with G-Cter in SUMO2) linkage. S709 bears the Phosphoserine mark. Glycyl lysine isopeptide (Lys-Gly) (interchain with G-Cter in SUMO2) cross-links involve residues K716, K728, and K731. S738 carries the phosphoserine modification. A Glycyl lysine isopeptide (Lys-Gly) (interchain with G-Cter in SUMO2) cross-link involves residue K745. The homeobox DNA-binding region spans 754–814; that stretch reads LDPKGHEDDS…SNKRKKCVRD (61 aa). The residue at position 805 (S805) is a Phosphoserine. Residues K807, K829, and K835 each participate in a glycyl lysine isopeptide (Lys-Gly) (interchain with G-Cter in SUMO2) cross-link. The disordered stretch occupies residues 873–1029; the sequence is DSFSDSFEHL…VQDDTEQLKW (157 aa). Phosphoserine is present on residues S876, S878, S886, S889, and S905. Residues K914, K929, and K936 each participate in a glycyl lysine isopeptide (Lys-Gly) (interchain with G-Cter in SUMO2) cross-link. The segment covering 922 to 954 has biased composition (basic and acidic residues); that stretch reads ESEKLDQKEEEDGSKYETIHLTEERAKLMHDAS. 2 positions are modified to phosphoserine: S954 and S956. Residues 972–982 show a composition bias toward polar residues; sequence PSESGPGSRQV. K1017 is covalently cross-linked (Glycyl lysine isopeptide (Lys-Gly) (interchain with G-Cter in SUMO2)). 2 positions are modified to N6-acetyllysine; alternate: K1036 and K1043. Glycyl lysine isopeptide (Lys-Gly) (interchain with G-Cter in SUMO2); alternate cross-links involve residues K1036 and K1043. The segment at 1045–1103 is disordered; that stretch reads QSQWENASENAERLPNPQIEWQNSTIDSEDGEQFDSMTDGVADPMHGSLTGVKLSSQQA. Position 1072 is a phosphoserine (S1072).

As to quaternary structure, interacts (via N-terminal region) with beta-catenin/CTNNB1 (via the central armadillo domains); interaction is direct and stabilizes CTNNB1 by modulating its phosphorylation by glycogen synthase kinase-3 beta GSK3B.

The protein resides in the nucleus. The protein localises to the chromosome. May be involved in transcriptional regulation. May mediate some of the neuroprotective peptide VIP-associated effects involving normal growth and cancer proliferation. Positively modulates WNT-beta-catenin/CTNN1B signaling, acting by regulating phosphorylation of, and thereby stabilizing, CTNNB1. May be required for neural induction and neuronal differentiation. May be involved in erythroid differentiation. The sequence is that of Activity-dependent neuroprotector homeobox protein (Adnp) from Rattus norvegicus (Rat).